The following is a 1628-amino-acid chain: THO complex subunit 2 (1628 aa).

Basic and acidic residues-rich tracts occupy residues 1–10 (MTSLPEKDQQ) and 1360–1399 (TDNK…EGNR). Disordered stretches follow at residues 1–21 (MTSL…NQKK) and 1337–1628 (VALN…RKIQ). A phosphothreonine mark is found at Thr1406 and Thr1408. The span at 1411-1429 (DIQRSDSKLREDQSRDRTP) shows a compositional bias: basic and acidic residues. Over residues 1430–1444 (QSRSFTNENNDNLRS) the composition is skewed to polar residues. The span at 1461–1474 (ARREHESQKSDRWR) shows a compositional bias: basic and acidic residues. The segment covering 1476 to 1493 (NGNVNRNPRVSNNNSTNV) has biased composition (low complexity). Basic and acidic residues predominate over residues 1494-1526 (SRERSSEANHRTSNDNKRDEVTEGKDKNKRQDI). Positions 1527–1550 (SGESNSRQNNAISRAGRSNGSNRG) are enriched in polar residues. The span at 1551 to 1560 (NDSRDADGRR) shows a compositional bias: basic and acidic residues. Ser1577 is modified (phosphoserine). Basic and acidic residues predominate over residues 1581 to 1628 (LREEDERENSRRRARQDDRRDRDSRQQRDRPRDRTSRSAREEKRRKIQ).

It belongs to the THOC2 family. As to quaternary structure, component of the THO complex. THO associates with DNA and RNA in vitro.

Its subcellular location is the nucleus. Component the THO subcomplex of the TREX complex, which operates in coupling transcription elongation to mRNA export. The THO complex is recruited to transcribed genes and moves along the gene with the elongating polymerase during transcription. THO is important for stabilizing nascent RNA in the RNA polymerase II elongation complex by preventing formation of DNA:RNA hybrids behind the elongating polymerase. The sequence is that of THO complex subunit 2 (tho2) from Schizosaccharomyces pombe (strain 972 / ATCC 24843) (Fission yeast).